Here is a 97-residue protein sequence, read N- to C-terminus: Cysteine-rich and transmembrane domain-containing protein 1 (97 aa).

Residues 1–40 (MNQENPPPYPGPGPTAPYPPYPPQPMGPGPMGGPYPPPQG) show a composition bias toward pro residues. A disordered region spans residues 1-61 (MNQENPPPYP…QGGPQEPPKT (61 aa)). Over residues 41–50 (YPYQGYPQYG) the composition is skewed to low complexity. Residues 74–91 (LGPSTCLTACWTALCCCC) form a helical membrane-spanning segment.

This sequence belongs to the CYSTM1 family.

It localises to the membrane. This chain is Cysteine-rich and transmembrane domain-containing protein 1 (CYSTM1), found in Homo sapiens (Human).